The chain runs to 589 residues: Protein NRT1/ PTR FAMILY 4.7 (589 aa).

A run of 12 helical transmembrane segments spans residues 59-79 (GMLA…AFLA), 105-125 (AFMG…DAFF), 127-147 (TFHI…VLTV), 160-180 (VFLF…KGSL), 201-221 (FFFN…VTVV), 230-250 (WSYG…VFLA), 344-364 (IVIK…CLAQ), 383-403 (FTVP…ILAP), 429-449 (IGTG…VETK), 471-491 (LPIT…ADLF), 520-540 (LAMG…VTGL), and 560-580 (FYWL…FWAS).

This sequence belongs to the major facilitator superfamily. Proton-dependent oligopeptide transporter (POT/PTR) (TC 2.A.17) family. As to expression, expressed in flowers.

The protein localises to the membrane. The protein is Protein NRT1/ PTR FAMILY 4.7 (NPF4.7) of Arabidopsis thaliana (Mouse-ear cress).